A 395-amino-acid polypeptide reads, in one-letter code: ETS-related transcription factor Elf-3 (395 aa).

The PNT domain maps to 69-155 (EPPAVLHLAE…AQLRDLTSSS (87 aa)). Residues 200–240 (ASPYYGSSYGPGAPSPGSSDFSTSGTDTPQSSHSSDSGGSD) are compositionally biased toward low complexity. Positions 200 to 275 (ASPYYGSSYG…HGKRKRGRPR (76 aa)) are disordered. Over residues 246–265 (TDSKVFPRDGFPDYKKGEPK) the composition is skewed to basic and acidic residues. A compositionally biased stretch (basic residues) spans 266–275 (HGKRKRGRPR). The ETS DNA-binding region spans 297–379 (THLWEFIRDI…DGRRLVYKFG (83 aa)).

It belongs to the ETS family. In terms of assembly, interacts with TBP. Interacts with CREBBP and EP300; these act as transcriptional coactivators of ELF3 and positively modulate its function. Interacts with XRCC5/KU86 and XRCC6/KU70; these inhibit the ability of ELF3 to bind DNA and negatively modulate its transcriptional activity. Associated with CLND7 and POU2F3. Interacts with ZNF768.

The protein resides in the cytoplasm. It is found in the nucleus. Its function is as follows. Transcriptional activator that binds and transactivates ETS sequences containing the consensus nucleotide core sequence GGA[AT]. Acts synergistically with POU2F3 to transactivate the SPRR2A promoter and with RUNX1 to transactivate the ANGPT1 promoter. Also transactivates collagenase, CCL20, CLND7, FLG, KRT8, NOS2, PTGS2, SPRR2B, TGFBR2 and TGM3 promoters. Represses KRT4 promoter activity. Involved in mediating vascular inflammation. May play an important role in epithelial cell differentiation and tumorigenesis. May be a critical downstream effector of the ERBB2 signaling pathway. May be associated with mammary gland development and involution. Plays an important role in the regulation of transcription with TATA-less promoters in preimplantation embryos, which is essential in preimplantation development. The polypeptide is ETS-related transcription factor Elf-3 (Rattus norvegicus (Rat)).